A 1071-amino-acid polypeptide reads, in one-letter code: ATP-dependent helicase/deoxyribonuclease subunit B (1071 aa).

Belongs to the helicase family. AddB/RexB type 2 subfamily. In terms of assembly, heterodimer of AddA and RexB. It depends on Mg(2+) as a cofactor.

Its function is as follows. The heterodimer acts as both an ATP-dependent DNA helicase and an ATP-dependent, dual-direction single-stranded exonuclease. Recognizes the chi site generating a DNA molecule suitable for the initiation of homologous recombination. This subunit has 5' -&gt; 3' nuclease activity but not helicase activity. This chain is ATP-dependent helicase/deoxyribonuclease subunit B, found in Streptococcus pyogenes serotype M1.